Reading from the N-terminus, the 323-residue chain is MSSNTSAPSLNALAGPLVESLVADAAKLRLIVAQENGARTVDAGANARGSIEAGRRIAEICLGGLGTVTIAPIGPVASWPYTVVVHSADPVLACLGSQYAGWSLADEEGDSGFFALGSGPGRAVAVVEELYKELGYRDNATTTALVLESGSAPPASVVNKVAAATGLAPENVTFIYAPTQSLAGSTQVVARVLEVALHKAHTVGFDLHKILDGIGSAPLSPPHPDFIQAMGRTNDAIIYGGRVQLFVDADDADAKQLAEQIPSTTSADHGAPFAEIFSRVNGDFYKIDGALFSPAEAIVTSVKTGKSFRGGRLEPQLVDASFV.

It belongs to the MCH family. As to quaternary structure, homodimer.

It localises to the cytoplasm. It catalyses the reaction 5,10-methenyl-5,6,7,8-tetrahydromethanopterin + H2O = N(5)-formyl-5,6,7,8-tetrahydromethanopterin + H(+). It functions in the pathway one-carbon metabolism; formaldehyde degradation; formate from formaldehyde (H(4)MPT route): step 3/5. Catalyzes the hydrolysis of methenyl-H(4)MPT(+) to 5-formyl-H(4)MPT. This is Methenyltetrahydromethanopterin cyclohydrolase (mch) from Methylorubrum extorquens (strain ATCC 14718 / DSM 1338 / JCM 2805 / NCIMB 9133 / AM1) (Methylobacterium extorquens).